The chain runs to 1153 residues: Bifunctional dioxygenase (DOX)-epoxy alcohol synthase (EAS) (1153 aa).

Low complexity predominate over residues serine 46–serine 56. The interval serine 46 to threonine 113 is disordered. Residues threonine 57–glycine 74 show a composition bias toward polar residues. Positions glutamate 81–serine 98 are enriched in basic and acidic residues. The segment at threonine 177 to valine 525 is fatty acid alpha-dioxygenase. Histidine 276 lines the heme b pocket. Tyrosine 454 is an active-site residue. Histidine 457 lines the heme b pocket. The interval arginine 732 to glutamate 1153 is epoxy alcohol synthase. Cysteine 1086 contacts heme.

It in the N-terminal section; belongs to the peroxidase family. The protein in the C-terminal section; belongs to the cytochrome P450 family. In terms of assembly, homotetramer. Heme b serves as cofactor. It depends on heme as a cofactor.

It carries out the reaction (9Z)-octadecenoate + O2 = (8R)-hydroperoxy-(9Z)-octadecenoate. The enzyme catalyses (9Z)-octadecenoate + O2 = 10-hydroperoxy-(8E)-octadecenoate. It catalyses the reaction (9Z,12Z)-octadecadienoate + O2 = (8E,10R,12Z)-10-hydroperoxyoctadeca-8,12-dienoate. The catalysed reaction is (9Z,12Z,15Z)-octadecatrienoate + O2 = (10R)-hydroperoxy-(8E,12Z,15Z)-octadecatrienoate. It carries out the reaction (9Z,12Z,15Z)-octadecatrienoate + O2 = (8R)-hydroperoxy-(9Z,12Z,15Z)-octadecatrienoate. The enzyme catalyses (11Z,14Z)-eicosadienoate + O2 = 12-hydroperoxy-(10E,14Z)-eicosadienoate. It catalyses the reaction (11Z,14Z,17Z)-eicosatrienoate + O2 = 12-hydroperoxy-(10E,14Z,17Z)-eicosatrienoate. The catalysed reaction is (12R,13S)-epoxy-(9Z)-octadecenoate + O2 = (12R,13S)-epoxy-(10R)-hydroperoxy-(8E)-octadecenoate. It carries out the reaction (8E,10R,12Z)-10-hydroperoxyoctadeca-8,12-dienoate = (12S,13R)-epoxy-(10R)-hydroxy-(8E)-octadecenoate. The enzyme catalyses (10R)-hydroperoxy-(8E,12Z,15Z)-octadecatrienoate = 12,13-epoxy-(10R)-hydroxy-(8E,15Z)-octadecadienoate. It catalyses the reaction 12-hydroperoxy-(10E,14Z)-eicosadienoate = 10,11-epoxy-12-hydroxy-(14Z)-eicosenoate. The catalysed reaction is 12-hydroperoxy-(10E,14Z,17Z)-eicosatrienoate = 14,15-epoxy-12-hydroxy-(10E,17Z)-eicosadienoate. It carries out the reaction (13R)-hydroperoxy-(9Z,11E)-octadecadienoate = (12R,13R)-epoxy-(11S)-hydroxy-(9Z)-octadecenoate. The enzyme catalyses (13S)-hydroperoxy-(9Z,11E)-octadecadienoate = (12R,13R)-epoxy-(11S)-hydroxy-(9Z)-octadecenoate. It catalyses the reaction 12-hydroperoxy-(10E,14Z)-eicosadienoate = 14,15-epoxy-12-hydroxy-(10E)-eicosenoate. The catalysed reaction is 12-hydroperoxy-(10E,14Z,17Z)-eicosatrienoate = 10,11-epoxy-12-hydroxy-(14Z,17Z)-eicosadienoate. In terms of biological role, bifunctional dioxygenase (DOX)-epoxy alcohol synthase (EAS) that converts linoleic acid (18:2n-6) sequentially to 10(R)-hydroperoxy-8(E),12(Z)-octadecadienoic acid (10R-HPODE) and 10R-HPODE further to 12 S(13R)-epoxy-10(R)-hydroxy-8(E)-octadecenoic acid as the end product. Oxygenation at C-10 occurs by retention of the pro-R hydrogen of C-8 of 18:2n-6, suggesting antarafacial hydrogen abstraction and oxygenation. The epoxy alcohol is formed from 10R-HPODE, likely by heterolytic cleavage of the dioxygen bond and subsequent intramolecular epoxidation of the 12(Z) double bond. The DOX domain is also able to oxygenate position C-8 of linoleic acid to produce 8(R)-hydroperoxy-8(E),12(Z)-octadecadienoic acid (8R-HPODE). Moreover, the DOX domain can oxygenate alpha-linolenic acid (18:3n-3) at C-8 or C-10 to produce respectively 8HOTrE and 10HOTrE, oleic acid (18:1n-9) at C-8 or C-10 to produce respectively 8-H(P)OME and 10-H(P)OME (with 8R stereoisomer to over 95%), eicosadienoic acid (20:2n-6) at C-10 or C-12 to produce respectively 10(11)-epoxy-12-hydroxy-14(Z)-eicosenoic acid and 14(15)-epoxy-12-hydroxy-10(E)-eicosenoic acid, as well as eicosatrienoic acid (20:3n-3) at C-10 or C-12 to produce respectively 10(11)-epoxy-12-hydroxy-14(Z),17(Z)-eicosadienoic acid and 14(15)-epoxy-12-hydroxy-14(Z),17(Z)-eicosadienoic acid. On the other side, the enzyme EAS domain can also catalyze the conversion of 10HOTrE into 12(13)-epoxy-10(R)-hydroxy-8(E),15(Z)-octadecadienoic acid, 13-R-HPODE into the stereoisomers of 12(13)-epoxy-11-hydroxy-9(Z)-octadecenoic acids (erythro/threo, 1:4), as well as 13S-HPODE into the stereoisomers of 12(13)-epoxy-11-hydroxy-9(Z)-octadecenoic acids (erythro/threo, 1:4) (EAS activity). Gamma-linolenic acid (18:3n-6) is not a substrate. This chain is Bifunctional dioxygenase (DOX)-epoxy alcohol synthase (EAS), found in Pyricularia oryzae (strain 70-15 / ATCC MYA-4617 / FGSC 8958) (Rice blast fungus).